Consider the following 165-residue polypeptide: Regulator of ribonuclease activity A (165 aa).

The protein belongs to the RraA family. As to quaternary structure, homotrimer. Binds to both RNA-binding sites in the C-terminal region of Rne and to RhlB.

It is found in the cytoplasm. Globally modulates RNA abundance by binding to RNase E (Rne) and regulating its endonucleolytic activity. Can modulate Rne action in a substrate-dependent manner by altering the composition of the degradosome. Modulates RNA-binding and helicase activities of the degradosome. The sequence is that of Regulator of ribonuclease activity A from Actinobacillus pleuropneumoniae serotype 5b (strain L20).